Consider the following 398-residue polypeptide: MKQLTILGSTGSVGTSTLAVVRENPDRFAIKALVAGRNVAVMAQQCIEFRPAYAAMADEGAARELRILLAENGIATEVMAGEQAACELAALDDVDQVTAAIVGAAGLLPTLAAIRAGKQVLLANKESLVTCGRLFMDAVQQSKTQLLPLDSEHNAIFQSLPESIQRQLGYSSLESHGVSRIVLTGSGGPFRTTPLEQFTAMTPDQACAHPNWSMGRKISVDSATMMNKGLEYIEARWLFNASAEQMEVILHPQSVIHSMVRYTDGSVLAQLGTPDMRTPIAHAMAYPQRVNSGVEALDFCRIGSLTFAEPERERYPCLYLAIEAFDAGQAATTALNAANEVAVAAFLQEQIRFTDIAAVNQKVVERLSLQEPSCIDAVLEIDRQAREVAVGLVKSLHN.

Residues T10, G11, S12, V13, G36, R37, N38, and N124 each contribute to the NADPH site. Residue K125 coordinates 1-deoxy-D-xylulose 5-phosphate. Position 126 (E126) interacts with NADPH. Position 150 (D150) interacts with Mn(2+). 1-deoxy-D-xylulose 5-phosphate is bound by residues S151, E152, S186, and H209. E152 contacts Mn(2+). Residue G215 coordinates NADPH. 1-deoxy-D-xylulose 5-phosphate-binding residues include S222, N227, K228, and E231. E231 contributes to the Mn(2+) binding site.

It belongs to the DXR family. As to quaternary structure, homodimer. Mg(2+) serves as cofactor. The cofactor is Mn(2+).

The enzyme catalyses 2-C-methyl-D-erythritol 4-phosphate + NADP(+) = 1-deoxy-D-xylulose 5-phosphate + NADPH + H(+). Its pathway is isoprenoid biosynthesis; isopentenyl diphosphate biosynthesis via DXP pathway; isopentenyl diphosphate from 1-deoxy-D-xylulose 5-phosphate: step 1/6. Catalyzes the NADPH-dependent rearrangement and reduction of 1-deoxy-D-xylulose-5-phosphate (DXP) to 2-C-methyl-D-erythritol 4-phosphate (MEP). This chain is 1-deoxy-D-xylulose 5-phosphate reductoisomerase, found in Serratia proteamaculans (strain 568).